The primary structure comprises 311 residues: Serine/threonine-protein phosphatase 4 catalytic subunit A (311 aa).

Mn(2+) is bound by residues D58, H60, D86, and N118. H119 acts as the Proton donor in catalysis. Mn(2+)-binding residues include H168 and H242. Leucine methyl ester is present on L311.

It belongs to the PPP phosphatase family. PP-4 (PP-X) subfamily. Serine/threonine-protein phosphatase 4 (PP4) occurs in different assemblies of the catalytic and one or more regulatory subunits. Mn(2+) serves as cofactor.

The protein localises to the cytoplasm. It is found in the cytoskeleton. It localises to the microtubule organizing center. The protein resides in the centrosome. It carries out the reaction O-phospho-L-seryl-[protein] + H2O = L-seryl-[protein] + phosphate. It catalyses the reaction O-phospho-L-threonyl-[protein] + H2O = L-threonyl-[protein] + phosphate. Protein phosphatase that regulates many processes such as microtubule organization at centrosomes. This Danio rerio (Zebrafish) protein is Serine/threonine-protein phosphatase 4 catalytic subunit A (ppp4ca).